Consider the following 730-residue polypeptide: Elongation factor 2 (730 aa).

The tr-type G domain occupies 19 to 229; that stretch reads DYIRNIGIVA…NITFKDIIQY (211 aa). Residues 28 to 35, 94 to 98, and 148 to 151 each bind GTP; these read AHIDHGKT, DTPGH, and NKVD. Histidine 597 carries the post-translational modification Diphthamide.

Belongs to the TRAFAC class translation factor GTPase superfamily. Classic translation factor GTPase family. EF-G/EF-2 subfamily.

It is found in the cytoplasm. Its function is as follows. Catalyzes the GTP-dependent ribosomal translocation step during translation elongation. During this step, the ribosome changes from the pre-translocational (PRE) to the post-translocational (POST) state as the newly formed A-site-bound peptidyl-tRNA and P-site-bound deacylated tRNA move to the P and E sites, respectively. Catalyzes the coordinated movement of the two tRNA molecules, the mRNA and conformational changes in the ribosome. The polypeptide is Elongation factor 2 (Methanosphaera stadtmanae (strain ATCC 43021 / DSM 3091 / JCM 11832 / MCB-3)).